We begin with the raw amino-acid sequence, 147 residues long: Large ribosomal subunit protein uL15 (147 aa).

A compositionally biased stretch (basic and acidic residues) spans 1–20 (MTLRLNDLKPADGARTERTR). Positions 1 to 61 (MTLRLNDLKP…GFEGGQTPMQ (61 aa)) are disordered. Gly residues predominate over residues 23 to 33 (RGIGSGLGKTA). Positions 34-47 (GRGHKGSFARKGGG) are enriched in basic residues.

The protein belongs to the universal ribosomal protein uL15 family. In terms of assembly, part of the 50S ribosomal subunit.

Functionally, binds to the 23S rRNA. The polypeptide is Large ribosomal subunit protein uL15 (Xanthomonas euvesicatoria pv. vesicatoria (strain 85-10) (Xanthomonas campestris pv. vesicatoria)).